The sequence spans 669 residues: Elongation factor G-like protein (669 aa).

In terms of domain architecture, tr-type G spans 7–279 (ESLRNVAIVG…VLIKEAPDPS (273 aa)). Residues 16-23 (GPYGSGKT) are G1. 16 to 23 (GPYGSGKT) contacts GTP. Residues 59–63 (QMSVE) are G2. The interval 80-83 (DCPG) is G3. GTP-binding positions include 80–84 (DCPGS) and 134–137 (NKMD). The tract at residues 134–137 (NKMD) is G4. Positions 257–259 (AAE) are G5.

Belongs to the TRAFAC class translation factor GTPase superfamily. Classic translation factor GTPase family. EF-G/EF-2 subfamily.

This Synechocystis sp. (strain ATCC 27184 / PCC 6803 / Kazusa) protein is Elongation factor G-like protein.